Consider the following 267-residue polypeptide: tRNA pseudouridine synthase A (267 aa).

Asp-51 functions as the Nucleophile in the catalytic mechanism. A substrate-binding site is contributed by Tyr-109.

This sequence belongs to the tRNA pseudouridine synthase TruA family.

It carries out the reaction uridine(38/39/40) in tRNA = pseudouridine(38/39/40) in tRNA. Its function is as follows. Formation of pseudouridine at positions 38, 39 and 40 in the anticodon stem and loop of transfer RNAs. In Methanothrix thermoacetophila (strain DSM 6194 / JCM 14653 / NBRC 101360 / PT) (Methanosaeta thermophila), this protein is tRNA pseudouridine synthase A.